Consider the following 428-residue polypeptide: Isocitrate lyase 1 (428 aa).

91-93 (SGW) contacts substrate. Aspartate 153 is a Mg(2+) binding site. Residue cysteine 191 is the Proton acceptor of the active site. Residues 192–193 (GH), arginine 228, 313–317 (NCSPS), and threonine 347 each bind substrate.

This sequence belongs to the isocitrate lyase/PEP mutase superfamily. Isocitrate lyase family. In terms of assembly, homotetramer. It depends on Mg(2+) as a cofactor.

It catalyses the reaction D-threo-isocitrate = glyoxylate + succinate. The catalysed reaction is (2S,3R)-3-hydroxybutane-1,2,3-tricarboxylate = pyruvate + succinate. Its pathway is carbohydrate metabolism; glyoxylate cycle; (S)-malate from isocitrate: step 1/2. In terms of biological role, involved in the persistence and virulence of M.tuberculosis. Catalyzes the reversible formation of succinate and glyoxylate from isocitrate, a key step of the glyoxylate cycle, which operates as an anaplerotic route for replenishing the tricarboxylic acid cycle during growth on fatty acid substrates. It also catalyzes the formation of pyruvate and succinate from 2-methylisocitrate, a key step in the methylcitrate cycle (propionate degradation route). This chain is Isocitrate lyase 1 (icl1), found in Mycobacterium tuberculosis (strain ATCC 35801 / TMC 107 / Erdman).